We begin with the raw amino-acid sequence, 385 residues long: 5'-AMP-activated protein kinase catalytic subunit alpha-1 (385 aa).

A Protein kinase domain is found at 1 to 229 (DGRVKIGHYI…IKDIREHEWF (229 aa)). Thr14 is subject to Phosphothreonine. 15-22 (LGVGTFGK) lines the ATP pocket. Residue Asp100 is the Proton acceptor of the active site. Phosphothreonine; by LKB1 and CaMKK2 is present on Thr133. A phosphothreonine mark is found at Thr219 and Thr276. The AIS stretch occupies residues 252–297 (EALKQDPLAVAYHLIIDNRDFYLATSPPDSFLDDHHLTRVPFLVAE). The residue at position 277 (Ser277) is a Phosphoserine. Ser281 carries the post-translational modification Phosphoserine; by ULK1. Position 289 is a phosphothreonine; by ULK1 (Thr289). A Phosphothreonine modification is found at Thr298. 2 positions are modified to phosphoserine: Ser353 and Ser383.

This sequence belongs to the protein kinase superfamily. CAMK Ser/Thr protein kinase family. SNF1 subfamily. AMPK is a heterotrimer of an alpha catalytic subunit (PRKAA1 or PRKAA2), a beta (PRKAB1 or PRKAB2) and a gamma non-catalytic subunits (PRKAG1, PRKAG2 or PRKAG3). Interacts with FNIP1 and FNIP2. Requires Mg(2+) as cofactor. Post-translationally, ubiquitinated. In terms of processing, phosphorylated at Thr-133 by STK11/LKB1 in complex with STE20-related adapter-alpha (STRADA) pseudo kinase and CAB39. Also phosphorylated at Thr-133 by CAMKK2; triggered by a rise in intracellular calcium ions, without detectable changes in the AMP/ATP ratio. CAMKK1 can also phosphorylate Thr-133, but at a much lower level. Dephosphorylated by protein phosphatase 2A and 2C (PP2A and PP2C). Phosphorylated by ULK1 and ULK2; leading to negatively regulate AMPK activity and suggesting the existence of a regulatory feedback loop between ULK1, ULK2 and AMPK. Dephosphorylated by PPM1A and PPM1B. Glycosylated; O-GlcNAcylated by OGT, promoting the AMP-activated protein kinase (AMPK) activity.

It localises to the cytoplasm. Its subcellular location is the nucleus. The catalysed reaction is L-seryl-[protein] + ATP = O-phospho-L-seryl-[protein] + ADP + H(+). The enzyme catalyses L-threonyl-[protein] + ATP = O-phospho-L-threonyl-[protein] + ADP + H(+). It carries out the reaction L-seryl-[acetyl-CoA carboxylase] + ATP = O-phospho-L-seryl-[acetyl-CoA carboxylase] + ADP + H(+). It catalyses the reaction L-seryl-[3-hydroxy-3-methylglutaryl-coenzyme A reductase] + ATP = O-phospho-L-seryl-[3-hydroxy-3-methylglutaryl-coenzyme A reductase] + ADP + H(+). The catalysed reaction is L-seryl-[tau protein] + ATP = O-phospho-L-seryl-[tau protein] + ADP + H(+). The enzyme catalyses L-threonyl-[tau protein] + ATP = O-phospho-L-threonyl-[tau protein] + ADP + H(+). Its activity is regulated as follows. Activated by phosphorylation on Thr-133. Binding of AMP to non-catalytic gamma subunit (PRKAG1, PRKAG2 or PRKAG3) results in allosteric activation, inducing phosphorylation on Thr-133. AMP-binding to gamma subunit also sustains activity by preventing dephosphorylation of Thr-133. ADP also stimulates Thr-133 phosphorylation, without stimulating already phosphorylated AMPK. ATP promotes dephosphorylation of Thr-133, rendering the enzyme inactive. Under physiological conditions AMPK mainly exists in its inactive form in complex with ATP, which is much more abundant than AMP. Selectively inhibited by compound C (6-[4-(2-Piperidin-1-yl-ethoxy)-phenyl)]-3-pyridin-4-yl-pyyrazolo[1,5-a] pyrimidine. Activated by resveratrol, a natural polyphenol present in red wine, and S17834, a synthetic polyphenol. Catalytic subunit of AMP-activated protein kinase (AMPK), an energy sensor protein kinase that plays a key role in regulating cellular energy metabolism. In response to reduction of intracellular ATP levels, AMPK activates energy-producing pathways and inhibits energy-consuming processes: inhibits protein, carbohydrate and lipid biosynthesis, as well as cell growth and proliferation. AMPK acts via direct phosphorylation of metabolic enzymes, and by longer-term effects via phosphorylation of transcription regulators. Regulates lipid synthesis by phosphorylating and inactivating lipid metabolic enzymes such as ACACA, ACACB, GYS1, HMGCR and LIPE; regulates fatty acid and cholesterol synthesis by phosphorylating acetyl-CoA carboxylase (ACACA and ACACB) and hormone-sensitive lipase (LIPE) enzymes, respectively. Promotes lipolysis of lipid droplets by mediating phosphorylation of isoform 1 of CHKA (CHKalpha2). Regulates insulin-signaling and glycolysis by phosphorylating IRS1, PFKFB2 and PFKFB3. AMPK stimulates glucose uptake in muscle by increasing the translocation of the glucose transporter SLC2A4/GLUT4 to the plasma membrane, possibly by mediating phosphorylation of TBC1D4/AS160. Regulates transcription and chromatin structure by phosphorylating transcription regulators involved in energy metabolism such as CRTC2/TORC2, FOXO3, histone H2B, HDAC5, MEF2C, MLXIPL/ChREBP, EP300, HNF4A, p53/TP53, SREBF1, SREBF2 and PPARGC1A. Acts as a key regulator of glucose homeostasis in liver by phosphorylating CRTC2/TORC2, leading to CRTC2/TORC2 sequestration in the cytoplasm. In response to stress, phosphorylates 'Ser-36' of histone H2B (H2BS36ph), leading to promote transcription. Acts as a key regulator of cell growth and proliferation by phosphorylating FNIP1, TSC2, RPTOR, WDR24 and ATG1/ULK1: in response to nutrient limitation, negatively regulates the mTORC1 complex by phosphorylating RPTOR component of the mTORC1 complex and by phosphorylating and activating TSC2. Also phosphorylates and inhibits GATOR2 subunit WDR24 in response to nutrient limitation, leading to suppress glucose-mediated mTORC1 activation. In response to energetic stress, phosphorylates FNIP1, inactivating the non-canonical mTORC1 signaling, thereby promoting nuclear translocation of TFEB and TFE3, and inducing transcription of lysosomal or autophagy genes. In response to nutrient limitation, promotes autophagy by phosphorylating and activating ATG1/ULK1. In that process also activates WDR45/WIPI4. Phosphorylates CASP6, thereby preventing its autoprocessing and subsequent activation. In response to nutrient limitation, phosphorylates transcription factor FOXO3 promoting FOXO3 mitochondrial import. Also acts as a regulator of cellular polarity by remodeling the actin cytoskeleton; probably by indirectly activating myosin. AMPK also acts as a regulator of circadian rhythm by mediating phosphorylation of CRY1, leading to destabilize it. May regulate the Wnt signaling pathway by phosphorylating CTNNB1, leading to stabilize it. Also has tau-protein kinase activity: in response to amyloid beta A4 protein (APP) exposure, activated by CAMKK2, leading to phosphorylation of MAPT/TAU; however the relevance of such data remains unclear in vivo. Also phosphorylates CFTR, EEF2K, KLC1, NOS3 and SLC12A1. Regulates hepatic lipogenesis. Activated via SIRT3, represses sterol regulatory element-binding protein (SREBP) transcriptional activities and ATP-consuming lipogenesis to restore cellular energy balance. Upon stress, regulates mitochondrial fragmentation through phosphorylation of MTFR1L. This is 5'-AMP-activated protein kinase catalytic subunit alpha-1 (PRKAA1) from Sus scrofa (Pig).